Consider the following 709-residue polypeptide: Septu protein PtuA (709 aa).

In terms of biological role, component of antiviral defense system Septu type II, composed of PtuA and PtuB. Expression of Septu type II in B.subtilis (strain BEST7003) confers resistance to phages SBSphiC and SpBeta. May be an ATPase. The polypeptide is Septu protein PtuA (Bacillus mycoides (strain KBAB4) (Bacillus weihenstephanensis)).